The sequence spans 2002 residues: [F-actin]-monooxygenase MICAL3 (2002 aa).

The segment at 2–494 (EERKHETMNP…RHLYDTGETK (493 aa)) is monooxygenase domain. Residues Cys97, 116–118 (EKR), 123–125 (RNN), Phe183, Tyr298, and Asp398 contribute to the FAD site. A Calponin-homology (CH) domain is found at 518–624 (VARSSKLLGW…YLTQFYEMFK (107 aa)). Ser649 carries the post-translational modification Phosphoserine. Residues 658–706 (GQTISRKRSPKDKKEKDLDGAGKRRKTSQSEEEEAPRGHRGERPTLVST) form a disordered region. The short motif at 663–684 (RKRSPKDKKEKDLDGAGKRRKT) is the Nuclear localization signal element. Residues 669-679 (DKKEKDLDGAG) show a composition bias toward basic and acidic residues. Phosphoserine occurs at positions 685 and 687. Residues 762–824 (DTCYFCQKRV…KPHYCYRLSG (63 aa)) enclose the LIM zinc-binding domain. Zn(2+) contacts are provided by Cys764, Cys767, His785, Cys788, Cys791, Cys794, Cys814, and His817. The interval 835 to 883 (PLSGKEAKGPLQDGATTDANGRANAVASSTERTPGSGVNGLEEPSIAKR) is disordered. Thr887 is subject to Phosphothreonine. Disordered regions lie at residues 907–1313 (QEVP…SPLA), 1335–1776 (RRSL…GKHR), and 1791–1821 (LSFSEDSDLSSDDVLEKSSQKSRREPRTYTE). Residues 938-950 (SEMEEEGEEEEEE) show a composition bias toward acidic residues. Position 977 is a phosphoserine (Ser977). Residues 991 to 1017 (NEEEEEEEEEYEEEEEEDYDEEEEESS) show a composition bias toward acidic residues. The segment covering 1041–1054 (HWTHIREREEEERM) has biased composition (basic and acidic residues). Over residues 1055-1066 (APASESSASGAP) the composition is skewed to low complexity. The span at 1068–1102 (DENDLEEDVDSEPAEIEGEAAEDGDPGDTGAELDD) shows a compositional bias: acidic residues. Residues Ser1134, Ser1143, Ser1160, and Ser1192 each carry the phosphoserine modification. Over residues 1150–1163 (GPSQATSPIRSPQE) the composition is skewed to polar residues. Residues 1191–1218 (KSPEERLFPEPLLPKEKPKADAPSDLKA) are compositionally biased toward basic and acidic residues. Over residues 1239–1258 (PGSPQPQPPVAASTPPPSPL) the composition is skewed to pro residues. Composition is skewed to polar residues over residues 1268–1280 (TEATVPSPTQSPI) and 1288–1302 (KTSTPLAPLPVQSQS). Ser1274 carries the post-translational modification Phosphoserine. Position 1276 is a phosphothreonine (Thr1276). Phosphoserine is present on Ser1278. Ser1310 and Ser1337 each carry phosphoserine. At Thr1341 the chain carries Phosphothreonine. Residues Ser1371 and Ser1384 each carry the phosphoserine modification. A compositionally biased stretch (basic and acidic residues) spans 1407–1422 (PSDRELRSAQEERREL). The span at 1423–1435 (SSSSGLGLHGSSS) shows a compositional bias: low complexity. Ser1433 carries the phosphoserine modification. Over residues 1436 to 1451 (NMKTLGSQSFNTSDSA) the composition is skewed to polar residues. A Phosphothreonine modification is found at Thr1454. The span at 1456 to 1467 (PSSPPPPPPPGE) shows a compositional bias: pro residues. A compositionally biased stretch (acidic residues) spans 1516–1530 (SVEEIPFADDVEDTY). Over residues 1588 to 1604 (EAKELAEERMRAREKSV) the composition is skewed to basic and acidic residues. Ser1649 is modified (phosphoserine). The residue at position 1651 (Thr1651) is a Phosphothreonine. Positions 1657–1668 (GSEEPTLKHEAT) are enriched in basic and acidic residues. Residues 1674-1694 (SPPSDSGGPDGSFTSSEGSSG) are compositionally biased toward low complexity. Residues 1695-1713 (KSKKRSSLFSPRRNKKEKK) are compositionally biased toward basic residues. Residues Ser1701 and Ser1704 each carry the phosphoserine modification. Over residues 1760 to 1769 (CPSTPSSGAT) the composition is skewed to polar residues. Residues 1804–1820 (VLEKSSQKSRREPRTYT) show a composition bias toward basic and acidic residues. The stretch at 1821 to 1992 (EEELNAKLTR…EEDKDLEAAM (172 aa)) forms a coiled coil. The 150-residue stretch at 1841 to 1990 (KQEELKRLHR…EREEDKDLEA (150 aa)) folds into the bMERB domain. Ser1912 is modified (phosphoserine).

The protein belongs to the Mical family. In terms of assembly, interacts with RAB1B, RAB8A, RAB10, RAB13 and RAB15 (in their GTP-bound forms); binding to RAB1B is of low affinity compared to other Rab proteins; at least in case of RAB8A can bind 2 molecules of RAB8A simultaneously through a high and a low affinity binding site, respectively. Interacts with ERC1 and RAB8A; may bridge ERC1 with RAB8A. Interacts with KIF23 and ERC1; enhances the interaction between KIF23 and ERC1. Interacts with NINL isoform 2. FAD is required as a cofactor. As to expression, ubiquitous.

The protein localises to the cytoplasm. It is found in the cell cortex. It localises to the cytoskeleton. Its subcellular location is the nucleus. The protein resides in the midbody. The protein localises to the spindle. It is found in the cilium basal body. It catalyses the reaction L-methionyl-[F-actin] + NADPH + O2 + H(+) = L-methionyl-(R)-S-oxide-[F-actin] + NADP(+) + H2O. Monooxygenase that promotes depolymerization of F-actin by mediating oxidation of specific methionine residues on actin to form methionine-sulfoxide, resulting in actin filament disassembly and preventing repolymerization. In the absence of actin, it also functions as a NADPH oxidase producing H(2)O(2). Seems to act as Rab effector protein and plays a role in vesicle trafficking. Involved in exocytic vesicles tethering and fusion: the monooxygenase activity is required for this process and implicates RAB8A associated with exocytotic vesicles. Required for cytokinesis. Contributes to stabilization and/or maturation of the intercellular bridge independently of its monooxygenase activity. Promotes recruitment of Rab8 and ERC1 to the intercellular bridge, and together these proteins are proposed to function in timely abscission. The sequence is that of [F-actin]-monooxygenase MICAL3 (MICAL3) from Homo sapiens (Human).